The following is a 425-amino-acid chain: Zinc finger protein 789 (425 aa).

A KRAB domain is found at 11-82 (LSFEDVAMYF…DLPRTGNRKA (72 aa)). 8 consecutive C2H2-type zinc fingers follow at residues 201 to 223 (YECS…QRIH), 229 to 251 (FECK…KQCH), 257 to 279 (YRCH…KRIH), 285 to 307 (YKCS…QVIH), 313 to 335 (HKCL…QQIH), 341 to 363 (HKCS…QRIH), 369 to 391 (FQCG…QVIH), and 397 to 419 (YQCV…QGTH).

Belongs to the krueppel C2H2-type zinc-finger protein family.

It is found in the nucleus. May be involved in transcriptional regulation. This chain is Zinc finger protein 789 (ZNF789), found in Homo sapiens (Human).